The following is a 293-amino-acid chain: Pyridoxal 5'-phosphate synthase subunit PdxS (293 aa).

Residue aspartate 25 coordinates D-ribose 5-phosphate. Lysine 82 (schiff-base intermediate with D-ribose 5-phosphate) is an active-site residue. Glycine 154 is a binding site for D-ribose 5-phosphate. Residue arginine 166 participates in D-glyceraldehyde 3-phosphate binding. D-ribose 5-phosphate contacts are provided by residues glycine 215 and 236–237; that span reads GS.

The protein belongs to the PdxS/SNZ family. In the presence of PdxT, forms a dodecamer of heterodimers.

It carries out the reaction aldehydo-D-ribose 5-phosphate + D-glyceraldehyde 3-phosphate + L-glutamine = pyridoxal 5'-phosphate + L-glutamate + phosphate + 3 H2O + H(+). It functions in the pathway cofactor biosynthesis; pyridoxal 5'-phosphate biosynthesis. Catalyzes the formation of pyridoxal 5'-phosphate from ribose 5-phosphate (RBP), glyceraldehyde 3-phosphate (G3P) and ammonia. The ammonia is provided by the PdxT subunit. Can also use ribulose 5-phosphate and dihydroxyacetone phosphate as substrates, resulting from enzyme-catalyzed isomerization of RBP and G3P, respectively. This Thermotoga petrophila (strain ATCC BAA-488 / DSM 13995 / JCM 10881 / RKU-1) protein is Pyridoxal 5'-phosphate synthase subunit PdxS.